The chain runs to 425 residues: UPF0597 protein VIBHAR_03081 (425 aa).

Belongs to the UPF0597 family.

The chain is UPF0597 protein VIBHAR_03081 from Vibrio campbellii (strain ATCC BAA-1116).